Consider the following 203-residue polypeptide: uncharacterized protein (203 aa).

Residues 1 to 23 (MGSSFVIDRSSSSPAPPRGPAPK) are disordered.

This is an uncharacterized protein from Saccharomyces cerevisiae (strain ATCC 204508 / S288c) (Baker's yeast).